The chain runs to 85 residues: Large ribosomal subunit protein bL27 (85 aa).

A disordered region spans residues 1 to 20; sequence MATKKAGGSTKNGRDSNPKM.

It belongs to the bacterial ribosomal protein bL27 family.

This Acinetobacter baumannii (strain AB307-0294) protein is Large ribosomal subunit protein bL27.